A 741-amino-acid polypeptide reads, in one-letter code: Methionine--tRNA ligase (741 aa).

Polar residues predominate over residues 1-22; sequence MTMKQYTMSKMNAETQTQTRES. A disordered region spans residues 1–25; sequence MTMKQYTMSKMNAETQTQTRESFPT. The 'HIGH' region motif lies at 36–46; the sequence is PYANGDLHIGH. 4 residues coordinate Zn(2+): Cys167, Cys170, Cys179, and Cys183. The disordered stretch occupies residues 309–329; that stretch reads VRSHSSSSAKDSSEGNSPSNI. The segment covering 311-329 has biased composition (low complexity); that stretch reads SHSSSSAKDSSEGNSPSNI. Residue Thr381 coordinates ATP. A disordered region spans residues 591–629; sequence KLADRVTDPTDDDDSDTDTETGTDVAETTNESHSESNMT. The segment covering 599–611 has biased composition (acidic residues); sequence PTDDDDSDTDTET. Polar residues predominate over residues 616–629; sequence AETTNESHSESNMT. Positions 643 to 741 constitute a tRNA-binding domain; it reads EFEELDLRVA…EDADPGTSIQ (99 aa).

It belongs to the class-I aminoacyl-tRNA synthetase family. MetG type 1 subfamily. In terms of assembly, homodimer. Zn(2+) serves as cofactor.

The protein localises to the cytoplasm. It catalyses the reaction tRNA(Met) + L-methionine + ATP = L-methionyl-tRNA(Met) + AMP + diphosphate. In terms of biological role, is required not only for elongation of protein synthesis but also for the initiation of all mRNA translation through initiator tRNA(fMet) aminoacylation. This Haloquadratum walsbyi (strain DSM 16790 / HBSQ001) protein is Methionine--tRNA ligase.